An 840-amino-acid chain; its full sequence is MTEELKNRLLSILKFVFAAVLFIAVVATLYHELAHINFKQTLEAFSKINRWYLVGLFICGGSAMILLSLYDLILVKGLKLDIPLIRVFKISYIINALNAIVGFGGFIGAGFRAFIYKNYTTDRKKLVHAISIILISMLMGLSLLSILVVLHIFDASHIINKVSWVRWILYVVALFLPLFIAYTMINPIDRNNKYLGVYCTLVSSFEWLAAATVLYLSTVIVDINIAFTTVIGIFIIAALSGLVSFIPGGFGAFDLVVLLGLKSLGVPEEKVLLALLLYRFAYYFVPVIIALILSTFEFGSSARKYFEESKYFVPARDVTSFLFSYQKDIIAKIPSFALATLVLITSFVFFINNITIVYDGLYDDHHFAYYIMLSVHTSACLLLLINVRGVFKQSRRAILFVMISLVLIFSATIYTYASLILLSWILLIFILLILAYRRSKVMKRPFRLKRLIFTIILSMLVLYVNHFIISETLYALDIYHIEMDTSLLKYYFWLTILVVVILVGIVAWLLGSRYTRPHQLEDLSRCKSIIETYGGNYLSHLIYSGDKDVFMHEAQQAFLMYRYKGNALVVLGDPIGDTKAFQSLLIDFYNYGEKLGYDIIFYQVSDRFMPLYHNFGNQFFKLGEEAIIDLTQFTTSGKKRRGFRATLNKFDDLNIQFEILEPPFSKDLIFQLKQVSNQWLDGRNEMHFSVGQFTEEYLQQAPIGIMKNEEGKVIAFCTLMPTYYNEAISVDLIRWLPDLDLPLMDGLYLHMLLWGKDKGYKAFNMGMATLSNVGQLNYSYPRERVAGRVFEHFNGLYRFQGLRKYKEKYSPNWEPRFLVYRKDSSLWYSMLKVMRVIRHK.

At 1–8 (MTEELKNR) the chain is on the cytoplasmic side. Residues 9 to 29 (LLSILKFVFAAVLFIAVVATL) traverse the membrane as a helical segment. Residues 30–52 (YHELAHINFKQTLEAFSKINRWY) are Extracellular-facing. Residues 53–73 (LVGLFICGGSAMILLSLYDLI) traverse the membrane as a helical segment. Over 74–89 (LVKGLKLDIPLIRVFK) the chain is Cytoplasmic. A helical transmembrane segment spans residues 90-110 (ISYIINALNAIVGFGGFIGAG). Over 111-129 (FRAFIYKNYTTDRKKLVHA) the chain is Extracellular. The helical transmembrane segment at 130–150 (ISIILISMLMGLSLLSILVVL) threads the bilayer. The Cytoplasmic segment spans residues 151-167 (HIFDASHIINKVSWVRW). The chain crosses the membrane as a helical span at residues 168 to 188 (ILYVVALFLPLFIAYTMINPI). The Extracellular portion of the chain corresponds to 189-193 (DRNNK). Residues 194–216 (YLGVYCTLVSSFEWLAAATVLYL) form a helical membrane-spanning segment. Residues 217 to 229 (STVIVDINIAFTT) lie on the Cytoplasmic side of the membrane. Residues 230–250 (VIGIFIIAALSGLVSFIPGGF) traverse the membrane as a helical segment. Topologically, residues 251–271 (GAFDLVVLLGLKSLGVPEEKV) are extracellular. Residues 272–292 (LLALLLYRFAYYFVPVIIALI) form a helical membrane-spanning segment. The Cytoplasmic segment spans residues 293–335 (LSTFEFGSSARKYFEESKYFVPARDVTSFLFSYQKDIIAKIPS). A helical transmembrane segment spans residues 336 to 356 (FALATLVLITSFVFFINNITI). The Extracellular portion of the chain corresponds to 357 to 366 (VYDGLYDDHH). Residues 367–387 (FAYYIMLSVHTSACLLLLINV) form a helical membrane-spanning segment. The Cytoplasmic portion of the chain corresponds to 388–394 (RGVFKQS). A run of 2 helical transmembrane segments spans residues 395–415 (RRAI…TIYT) and 416–436 (YASL…ILAY). Topologically, residues 437–450 (RRSKVMKRPFRLKR) are cytoplasmic. The helical transmembrane segment at 451–471 (LIFTIILSMLVLYVNHFIISE) threads the bilayer. Residues 472–490 (TLYALDIYHIEMDTSLLKY) lie on the Extracellular side of the membrane. Residues 491-511 (YFWLTILVVVILVGIVAWLLG) traverse the membrane as a helical segment. Residues 512–840 (SRYTRPHQLE…LKVMRVIRHK (329 aa)) lie on the Cytoplasmic side of the membrane.

The protein belongs to the LPG synthase family.

The protein resides in the cell membrane. It carries out the reaction L-lysyl-tRNA(Lys) + a 1,2-diacyl-sn-glycero-3-phospho-(1'-sn-glycerol) = a 1,2-diacyl-sn-glycero-3-phospho-1'-(3'-O-L-lysyl)-sn-glycerol + tRNA(Lys). Functionally, catalyzes the transfer of a lysyl group from L-lysyl-tRNA(Lys) to membrane-bound phosphatidylglycerol (PG), which produces lysylphosphatidylglycerol (LPG), a major component of the bacterial membrane with a positive net charge. LPG synthesis contributes to bacterial virulence as it is involved in the resistance mechanism against cationic antimicrobial peptides (CAMP) produces by the host's immune system (defensins, cathelicidins) and by the competing microorganisms (bacteriocins). In fact, the modification of anionic phosphatidylglycerol with positively charged L-lysine results in repulsion of the peptides. The protein is Phosphatidylglycerol lysyltransferase (mprF) of Staphylococcus haemolyticus (strain JCSC1435).